The sequence spans 185 residues: ATP synthase subunit delta (185 aa).

Belongs to the ATPase delta chain family. In terms of assembly, F-type ATPases have 2 components, F(1) - the catalytic core - and F(0) - the membrane proton channel. F(1) has five subunits: alpha(3), beta(3), gamma(1), delta(1), epsilon(1). CF(0) has four main subunits: a(1), b(1), b'(1) and c(10-14). The alpha and beta chains form an alternating ring which encloses part of the gamma chain. F(1) is attached to F(0) by a central stalk formed by the gamma and epsilon chains, while a peripheral stalk is formed by the delta, b and b' chains.

Its subcellular location is the cellular thylakoid membrane. Its function is as follows. F(1)F(0) ATP synthase produces ATP from ADP in the presence of a proton or sodium gradient. F-type ATPases consist of two structural domains, F(1) containing the extramembraneous catalytic core and F(0) containing the membrane proton channel, linked together by a central stalk and a peripheral stalk. During catalysis, ATP synthesis in the catalytic domain of F(1) is coupled via a rotary mechanism of the central stalk subunits to proton translocation. This protein is part of the stalk that links CF(0) to CF(1). It either transmits conformational changes from CF(0) to CF(1) or is implicated in proton conduction. In terms of biological role, the complex from the organism is particularly stable to disruption and remains functional after 6 hrs at 55 degrees Celsius. The polypeptide is ATP synthase subunit delta (Thermosynechococcus vestitus (strain NIES-2133 / IAM M-273 / BP-1)).